We begin with the raw amino-acid sequence, 79 residues long: Acyl carrier protein (79 aa).

The 76-residue stretch at Ser-2 to Thr-77 folds into the Carrier domain. An O-(pantetheine 4'-phosphoryl)serine modification is found at Ser-37.

This sequence belongs to the acyl carrier protein (ACP) family. 4'-phosphopantetheine is transferred from CoA to a specific serine of apo-ACP by AcpS. This modification is essential for activity because fatty acids are bound in thioester linkage to the sulfhydryl of the prosthetic group.

The protein resides in the cytoplasm. Its pathway is lipid metabolism; fatty acid biosynthesis. Its function is as follows. Carrier of the growing fatty acid chain in fatty acid biosynthesis. The protein is Acyl carrier protein of Rhodospirillum centenum (strain ATCC 51521 / SW).